Here is a 132-residue protein sequence, read N- to C-terminus: Large ribosomal subunit protein bL21 (132 aa).

Residues 112-132 (AEKPARKPRAKKTNEVTTDGA) are disordered.

Belongs to the bacterial ribosomal protein bL21 family. Part of the 50S ribosomal subunit. Contacts protein L20.

This protein binds to 23S rRNA in the presence of protein L20. This is Large ribosomal subunit protein bL21 from Dehalococcoides mccartyi (strain ATCC BAA-2266 / KCTC 15142 / 195) (Dehalococcoides ethenogenes (strain 195)).